Reading from the N-terminus, the 634-residue chain is tRNA uridine 5-carboxymethylaminomethyl modification enzyme MnmG (634 aa).

Residue 14–19 (GGGHAG) coordinates FAD. 279–293 (GPRYCPSIEDKVVRF) contributes to the NAD(+) binding site.

This sequence belongs to the MnmG family. Homodimer. Heterotetramer of two MnmE and two MnmG subunits. The cofactor is FAD.

The protein resides in the cytoplasm. Its function is as follows. NAD-binding protein involved in the addition of a carboxymethylaminomethyl (cmnm) group at the wobble position (U34) of certain tRNAs, forming tRNA-cmnm(5)s(2)U34. This is tRNA uridine 5-carboxymethylaminomethyl modification enzyme MnmG from Xanthomonas euvesicatoria pv. vesicatoria (strain 85-10) (Xanthomonas campestris pv. vesicatoria).